Consider the following 649-residue polypeptide: 1-deoxy-D-xylulose-5-phosphate synthase (649 aa).

Residues His-73 and 114-116 (SHA) each bind thiamine diphosphate. Asp-145 is a binding site for Mg(2+). Thiamine diphosphate-binding positions include 146–147 (GA), Asn-175, Tyr-286, and Glu-367. Residue Asn-175 coordinates Mg(2+).

It belongs to the transketolase family. DXPS subfamily. Homodimer. Mg(2+) serves as cofactor. Requires thiamine diphosphate as cofactor.

It carries out the reaction D-glyceraldehyde 3-phosphate + pyruvate + H(+) = 1-deoxy-D-xylulose 5-phosphate + CO2. The protein operates within metabolic intermediate biosynthesis; 1-deoxy-D-xylulose 5-phosphate biosynthesis; 1-deoxy-D-xylulose 5-phosphate from D-glyceraldehyde 3-phosphate and pyruvate: step 1/1. Functionally, catalyzes the acyloin condensation reaction between C atoms 2 and 3 of pyruvate and glyceraldehyde 3-phosphate to yield 1-deoxy-D-xylulose-5-phosphate (DXP). The polypeptide is 1-deoxy-D-xylulose-5-phosphate synthase (Rhodococcus jostii (strain RHA1)).